The sequence spans 176 residues: 3-hydroxyanthranilate 3,4-dioxygenase (176 aa).

R44 contacts O2. Fe cation contacts are provided by H48, E54, and H92. Residue E54 coordinates substrate. Substrate contacts are provided by R96 and E106. Fe cation contacts are provided by C121, C124, C158, and C161.

The protein belongs to the 3-HAO family. As to quaternary structure, homodimer. Fe(2+) serves as cofactor.

It catalyses the reaction 3-hydroxyanthranilate + O2 = (2Z,4Z)-2-amino-3-carboxymuconate 6-semialdehyde. Its pathway is cofactor biosynthesis; NAD(+) biosynthesis; quinolinate from L-kynurenine: step 3/3. Catalyzes the oxidative ring opening of 3-hydroxyanthranilate to 2-amino-3-carboxymuconate semialdehyde, which spontaneously cyclizes to quinolinate. The polypeptide is 3-hydroxyanthranilate 3,4-dioxygenase (Xanthomonas campestris pv. campestris (strain 8004)).